Consider the following 399-residue polypeptide: Sperm equatorial segment protein 1 (399 aa).

The N-terminal stretch at 1–18 (MKLVVLVALWLWPSSLLA) is a signal peptide. Residue Asn128 is glycosylated (N-linked (GlcNAc...) asparagine). The span at 136–145 (EEPFIEKEPE) shows a compositional bias: basic and acidic residues. The disordered stretch occupies residues 136–250 (EEPFIEKEPE…PSAEDLPGRH (115 aa)). Acidic residues predominate over residues 157–167 (PEPELEPEPEP). Residues 182–206 (VTSTTPNKELTGTSRISSMATQPAN) show a composition bias toward polar residues. Over residues 207–225 (TQATRITVTVKTTSTMDVS) the composition is skewed to low complexity.

This sequence belongs to the SPESP1 family. In terms of processing, glycosylated. In testis there are two predominant forms of 77- and 67-kDa and a form of 47-kDa, whereas in epididymal sperm from caput, corpus, and cauda there are two forms of 47- and 43-kDa. Testis forms contain complex carbohydrate residues. Epididymal sperm forms are N-glycosylated. Then undergoes significant glycosylation in the testis and that the majority of these glycoconjugates are removed by the time sperm reach the caput epididymis. As to expression, testis specific.

Its subcellular location is the cytoplasmic vesicle. It is found in the secretory vesicle. The protein resides in the acrosome. Functionally, involved in fertilization ability of sperm. This chain is Sperm equatorial segment protein 1, found in Mus musculus (Mouse).